We begin with the raw amino-acid sequence, 437 residues long: Adenylosuccinate lyase (437 aa).

N(6)-(1,2-dicarboxyethyl)-AMP is bound by residues 4–5 (RY), 70–72 (KHD), and 96–97 (TS). His-144 (proton donor/acceptor) is an active-site residue. N(6)-(1,2-dicarboxyethyl)-AMP is bound at residue Gln-215. Ser-265 (proton donor/acceptor) is an active-site residue. Residues Ser-266, 271–273 (KKN), and 310–314 (SVERV) contribute to the N(6)-(1,2-dicarboxyethyl)-AMP site.

Belongs to the lyase 1 family. Adenylosuccinate lyase subfamily. Homooligomer. Residues from neighboring subunits contribute catalytic and substrate-binding residues to each active site.

The enzyme catalyses N(6)-(1,2-dicarboxyethyl)-AMP = fumarate + AMP. It carries out the reaction (2S)-2-[5-amino-1-(5-phospho-beta-D-ribosyl)imidazole-4-carboxamido]succinate = 5-amino-1-(5-phospho-beta-D-ribosyl)imidazole-4-carboxamide + fumarate. Its pathway is purine metabolism; AMP biosynthesis via de novo pathway; AMP from IMP: step 2/2. It participates in purine metabolism; IMP biosynthesis via de novo pathway; 5-amino-1-(5-phospho-D-ribosyl)imidazole-4-carboxamide from 5-amino-1-(5-phospho-D-ribosyl)imidazole-4-carboxylate: step 2/2. In terms of biological role, catalyzes two reactions in de novo purine nucleotide biosynthesis. Catalyzes the breakdown of 5-aminoimidazole- (N-succinylocarboxamide) ribotide (SAICAR or 2-[5-amino-1-(5-phospho-beta-D-ribosyl)imidazole-4-carboxamido]succinate) to 5-aminoimidazole-4-carboxamide ribotide (AICAR or 5-amino-1-(5-phospho-beta-D-ribosyl)imidazole-4-carboxamide) and fumarate, and of adenylosuccinate (ADS or N(6)-(1,2-dicarboxyethyl)-AMP) to adenosine monophosphate (AMP) and fumarate. This chain is Adenylosuccinate lyase (purB), found in Aquifex aeolicus (strain VF5).